An 80-amino-acid polypeptide reads, in one-letter code: Gamma-conotoxin-like Am6.6 (80 aa).

The first 19 residues, 1–19 (MEKLTILLLVAAILMSTQA), serve as a signal peptide directing secretion. The propeptide occupies 20-45 (LNQEQRQQAKINLLSKKKPSAERWRR). Cystine bridges form between C47/C61, C54/C65, and C60/C70. 4-carboxyglutamate occurs at positions 56 and 59. Residue E71 is modified to 4-carboxyglutamate. 4-hydroxyproline is present on P76. Positions 78–80 (RAI) are excised as a propeptide.

This sequence belongs to the conotoxin O2 family. Expressed by the venom duct.

Its subcellular location is the secreted. Its function is as follows. Gamma-conotoxins may act on voltage-gated non-specific cation pacemaker channels (HCN). This Conus amadis (Amadis cone) protein is Gamma-conotoxin-like Am6.6.